The chain runs to 558 residues: Urease subunit alpha 2 (558 aa).

Positions 129 to 558 (GAVDTHVHLL…SVSLNRLYFL (430 aa)) constitute a Urease domain. Histidine 134, histidine 136, and lysine 214 together coordinate Ni(2+). The residue at position 214 (lysine 214) is an N6-carboxylysine. Histidine 216 provides a ligand contact to substrate. Ni(2+)-binding residues include histidine 243 and histidine 269. Catalysis depends on histidine 317, which acts as the Proton donor. Aspartate 357 contacts Ni(2+).

This sequence belongs to the metallo-dependent hydrolases superfamily. Urease alpha subunit family. As to quaternary structure, may form a heterohexamer of 3 UreC (alpha) and 3 UreAB (gamma/beta) subunits. May also form a heterotrimer of UreA (gamma), UreB (beta) and UreC (alpha) subunits. Three heterotrimers associate to form the active enzyme. The cofactor is Ni cation. Carboxylation allows a single lysine to coordinate two nickel ions.

The protein resides in the cytoplasm. The catalysed reaction is urea + 2 H2O + H(+) = hydrogencarbonate + 2 NH4(+). It participates in nitrogen metabolism; urea degradation; CO(2) and NH(3) from urea (urease route): step 1/1. In Streptomyces coelicolor (strain ATCC BAA-471 / A3(2) / M145), this protein is Urease subunit alpha 2.